Reading from the N-terminus, the 547-residue chain is Chaperonin GroEL 1 (547 aa).

Residues 30-33 (TLGP), Lys51, 87-91 (DGTTT), Gly415, 479-481 (NAA), and Asp495 each bind ATP.

This sequence belongs to the chaperonin (HSP60) family. As to quaternary structure, forms a cylinder of 14 subunits composed of two heptameric rings stacked back-to-back. Interacts with the co-chaperonin GroES.

It is found in the cytoplasm. It catalyses the reaction ATP + H2O + a folded polypeptide = ADP + phosphate + an unfolded polypeptide.. Its function is as follows. Together with its co-chaperonin GroES, plays an essential role in assisting protein folding. The GroEL-GroES system forms a nano-cage that allows encapsulation of the non-native substrate proteins and provides a physical environment optimized to promote and accelerate protein folding. This chain is Chaperonin GroEL 1, found in Vibrio parahaemolyticus serotype O3:K6 (strain RIMD 2210633).